The sequence spans 296 residues: MQEALSILLGDEAKGLSPAVLGRLKAEWAQEYAHWQRRSYRKALCLLVGRRYLYEPPCGEDPRICLLVIIGVTAEGKKELVMVSDGLRESKASWLEILRDLQARGLETAPLLAIGDGAMGFWAALDEAYPETGQQRCWVHKTANILNELPKAQQSKAKAALQEIWMAANRQAAEKALDVFVRNYQAKYPKAVAKLEKDRAELLAFYDFPAEHWRHIRTTNAIESTFATVRHRTTRTKNCVSRSSFLGLGFKMLQQAEKRWIGIYAPEKVLQLFAGVKFIDGIPANLTLPDDQQTAA.

It belongs to the transposase mutator family.

Required for the transposition of the insertion element. The protein is Transposase for insertion sequence element IST2 of Acidithiobacillus ferrooxidans (Thiobacillus ferrooxidans).